Reading from the N-terminus, the 215-residue chain is MKLVLMGLPGAGKGTQAEQIVEKYNIPHISTGDMFRAAMKNNTELGKKAKSFMDNGDLVPDEVTNGIVRERLAEDDAKNGFLLDGFPRTVEQAEELENILSDLGTELDAVINIEVDKDVLMKRLTGRWICRTCGKTYHEIYNPPKVPGKCDLDGGELYQREDDKKETVENRLNVNMKQTKPLLDFYSEKGKLHSINGEQDINDVFVDVEKILASF.

Gly-10–Thr-15 serves as a coordination point for ATP. Residues Ser-30–Val-59 form an NMP region. Residues Thr-31, Arg-36, Asp-57–Val-59, Gly-85–Arg-88, and Gln-92 contribute to the AMP site. Residues Gly-126–Asp-163 form an LID region. ATP is bound at residue Arg-127. Residues Cys-130 and Cys-133 each coordinate Zn(2+). Thr-136–Tyr-137 lines the ATP pocket. Zn(2+) is bound by residues Cys-150 and Asp-153. AMP-binding residues include Arg-160 and Arg-171. Position 199 (Gln-199) interacts with ATP.

This sequence belongs to the adenylate kinase family. In terms of assembly, monomer.

The protein localises to the cytoplasm. It carries out the reaction AMP + ATP = 2 ADP. It participates in purine metabolism; AMP biosynthesis via salvage pathway; AMP from ADP: step 1/1. Its function is as follows. Catalyzes the reversible transfer of the terminal phosphate group between ATP and AMP. Plays an important role in cellular energy homeostasis and in adenine nucleotide metabolism. In Listeria innocua serovar 6a (strain ATCC BAA-680 / CLIP 11262), this protein is Adenylate kinase.